A 483-amino-acid polypeptide reads, in one-letter code: Altronate oxidoreductase (483 aa).

An NAD(+)-binding site is contributed by 18–29 (IIQFGEGNFLRA).

The protein belongs to the mannitol dehydrogenase family. UxaB subfamily.

It catalyses the reaction D-altronate + NAD(+) = keto-D-tagaturonate + NADH + H(+). It participates in carbohydrate metabolism; pentose and glucuronate interconversion. The polypeptide is Altronate oxidoreductase (Escherichia coli O17:K52:H18 (strain UMN026 / ExPEC)).